The following is a 94-amino-acid chain: MAGPKRFNKDKRPKRNTQSLLFKRKRFCRFTAAGVEEIDYKDIDTLRDFVSENGKIIPARLTGTRAIFQRQINTAVKRARFLAMLPYSDQHRSL.

It belongs to the bacterial ribosomal protein bS18 family. Part of the 30S ribosomal subunit. Forms a tight heterodimer with protein bS6.

Binds as a heterodimer with protein bS6 to the central domain of the 16S rRNA, where it helps stabilize the platform of the 30S subunit. The polypeptide is Small ribosomal subunit protein bS18 (Polaromonas naphthalenivorans (strain CJ2)).